The sequence spans 215 residues: Adenylate kinase (215 aa).

10-15 provides a ligand contact to ATP; the sequence is GAGKGT. The NMP stretch occupies residues 30 to 59; the sequence is STGDMLRAAVKAGSPLGLKVKGVMDSGGLV. AMP-binding positions include Thr-31, Arg-36, 57 to 59, 85 to 88, and Gln-92; these read GLV and GFPR. The segment at 122–159 is LID; that stretch reads GRRVHAASGRVYHDLHNPPKVAGKDDETGEDLIQREDD. ATP contacts are provided by residues Arg-123 and 132 to 133; that span reads VY. AMP is bound by residues Arg-156 and Arg-167. Gly-201 lines the ATP pocket.

It belongs to the adenylate kinase family. Monomer.

It is found in the cytoplasm. The catalysed reaction is AMP + ATP = 2 ADP. It functions in the pathway purine metabolism; AMP biosynthesis via salvage pathway; AMP from ADP: step 1/1. Functionally, catalyzes the reversible transfer of the terminal phosphate group between ATP and AMP. Plays an important role in cellular energy homeostasis and in adenine nucleotide metabolism. The protein is Adenylate kinase of Azotobacter vinelandii (strain DJ / ATCC BAA-1303).